The chain runs to 414 residues: Membrane protein UL43 (414 aa).

A run of 6 helical transmembrane segments spans residues G39 to S59, G61 to L81, A96 to G116, V121 to L141, L148 to L168, and A184 to F204. The tract at residues P225–V253 is disordered. A compositionally biased stretch (basic and acidic residues) spans A228–D237. 2 consecutive transmembrane segments (helical) span residues G339 to I359 and A383 to V403.

It belongs to the alphaherpesvirinae HHV-1 UL43 family.

The protein resides in the membrane. This is Membrane protein UL43 from Homo sapiens (Human).